We begin with the raw amino-acid sequence, 597 residues long: uncharacterized protein (597 aa).

Disordered regions lie at residues 165 to 197 (NSRAVPPPAPPNPPKMEKHMSHDTSGRGSIFSK) and 278 to 344 (ERSS…RGTL). Residues 169–178 (VPPPAPPNPP) show a composition bias toward pro residues. The span at 179–189 (KMEKHMSHDTS) shows a compositional bias: basic and acidic residues. Residues 293–313 (STEVSITSSSPSPSSSSSTST) show a composition bias toward low complexity. Positions 402 to 465 (WSLDDVLLWL…LDDLSKIIEN (64 aa)) constitute an SAM domain. The tract at residues 576–597 (EESQQKESSSSGISSSPQTPTE) is disordered. Residues 581-597 (KESSSSGISSSPQTPTE) show a composition bias toward low complexity.

This is an uncharacterized protein from Caenorhabditis elegans.